Here is a 199-residue protein sequence, read N- to C-terminus: Recombination protein RecR (199 aa).

A C4-type zinc finger spans residues 57-72 (CSVCGNITEQDPCAIC). The Toprim domain occupies 80–176 (STIMVVEEAK…KVTRLAAGLA (97 aa)).

This sequence belongs to the RecR family.

Functionally, may play a role in DNA repair. It seems to be involved in an RecBC-independent recombinational process of DNA repair. It may act with RecF and RecO. The sequence is that of Recombination protein RecR from Lactobacillus delbrueckii subsp. bulgaricus (strain ATCC BAA-365 / Lb-18).